A 377-amino-acid polypeptide reads, in one-letter code: NADH dehydrogenase [ubiquinone] 1 alpha subcomplex subunit 9, mitochondrial (377 aa).

A mitochondrion-targeting transit peptide spans 1-35; sequence MAAAAQSRVVRVLSMSRSAITAIATSVCHGPPCRQ. Position 175 is an N6-succinyllysine (Lys-175). An N6-acetyllysine mark is found at Lys-189 and Lys-370.

This sequence belongs to the complex I NDUFA9 subunit family. In terms of assembly, complex I is composed of 45 different subunits. This a component of the hydrophobic protein fraction. Interacts with BLOC1S1. Interacts with SLC2A4. Interacts with CLOCK. Interacts with RAB5IF. It depends on FAD as a cofactor. In terms of processing, acetylated on lysine residues. BLOC1S1 is required for acetylation. Acetylated by CLOCK in a circadian manner.

The protein localises to the mitochondrion matrix. In terms of biological role, accessory subunit of the mitochondrial membrane respiratory chain NADH dehydrogenase (Complex I), that is believed not to be involved in catalysis. Required for proper complex I assembly. Complex I functions in the transfer of electrons from NADH to the respiratory chain. The immediate electron acceptor for the enzyme is believed to be ubiquinone. This is NADH dehydrogenase [ubiquinone] 1 alpha subcomplex subunit 9, mitochondrial (NDUFA9) from Homo sapiens (Human).